A 572-amino-acid polypeptide reads, in one-letter code: DBH-like monooxygenase protein 2 homolog (572 aa).

Residues 1–26 (MGTCLKGNMSVLSLVLFLLSVQQFWA) form the signal peptide. Residues Asn8, Asn64, Asn187, and Asn203 are each glycosylated (N-linked (GlcNAc...) asparagine). The Extracellular segment spans residues 27–552 (QEDPLLPFSE…SPPEPCVRAC (526 aa)). In terms of domain architecture, DOMON spans 42 to 157 (HNVQLKWGFD…LPMKLIYAYG (116 aa)). Tyr207 is a catalytic residue. Intrachain disulfides connect Cys209/Cys256 and Cys244/Cys263. The Cu cation site is built by His237 and His238. Residue His301 participates in Cu cation binding. Residue Asn306 is glycosylated (N-linked (GlcNAc...) asparagine). 2 cysteine pairs are disulfide-bonded: Cys358–Cys472 and Cys435–Cys457. The active site involves His381. Residues His381, His383, and Met456 each contribute to the Cu cation site. 4 N-linked (GlcNAc...) asparagine glycosylation sites follow: Asn468, Asn503, Asn518, and Asn534. Residues 553–571 (ATKNLAFMSLFLCLAGMWA) traverse the membrane as a helical segment. Residue Ser572 is a topological domain, cytoplasmic.

This sequence belongs to the copper type II ascorbate-dependent monooxygenase family. Cu(2+) is required as a cofactor.

It localises to the membrane. The protein is DBH-like monooxygenase protein 2 homolog (moxd2) of Danio rerio (Zebrafish).